We begin with the raw amino-acid sequence, 404 residues long: Dihydroorotase (404 aa).

Zn(2+) is bound by residues His57 and His59. Substrate-binding positions include 59–61 and Asn91; that span reads HLR. Residues Lys135, His164, His204, and Asp272 each contribute to the Zn(2+) site. Residue Lys135 is modified to N6-carboxylysine. The active site involves Asp272. Residues His276 and 286–287 contribute to the substrate site; that span reads AG.

Belongs to the metallo-dependent hydrolases superfamily. DHOase family. Class I DHOase subfamily. It depends on Zn(2+) as a cofactor.

It catalyses the reaction (S)-dihydroorotate + H2O = N-carbamoyl-L-aspartate + H(+). The protein operates within pyrimidine metabolism; UMP biosynthesis via de novo pathway; (S)-dihydroorotate from bicarbonate: step 3/3. In terms of biological role, catalyzes the reversible cyclization of carbamoyl aspartate to dihydroorotate. The protein is Dihydroorotase of Pyrococcus abyssi (strain GE5 / Orsay).